Here is a 286-residue protein sequence, read N- to C-terminus: Probable protein S-acyltransferase 16 (286 aa).

A run of 2 helical transmembrane segments spans residues 11–31 and 45–65; these read PVTV…FTFI and NAAA…IAVF. The DHHC domain occupies 97 to 147; sequence RYCQKCSHFKPPRAHHCRVCKRCVLRMDHHCIWINNCVGHTNYKVFFVFVV. Residue C127 is the S-palmitoyl cysteine intermediate of the active site. 2 helical membrane passes run 141 to 161 and 182 to 202; these read VFFV…VLLV and IYVI…VLLG.

Belongs to the DHHC palmitoyltransferase family.

It is found in the golgi apparatus membrane. It carries out the reaction L-cysteinyl-[protein] + hexadecanoyl-CoA = S-hexadecanoyl-L-cysteinyl-[protein] + CoA. Its function is as follows. Palmitoyl acyltransferase. In Arabidopsis thaliana (Mouse-ear cress), this protein is Probable protein S-acyltransferase 16 (PAT16).